The primary structure comprises 2715 residues: Chromodomain-helicase-DNA-binding protein 6 (2715 aa).

Over residues 1 to 11 (MKMKIQKKEKQ) the composition is skewed to basic and acidic residues. Disordered regions lie at residues 1–30 (MKMK…SVNF) and 66–244 (EEAA…QVKR). The tract at residues 1-747 (MKMKIQKKEK…MMELRKCCNH (747 aa)) is required for DNA-dependent ATPase activity. Residues 12–27 (LSNLKVLNHSPMSDAS) show a composition bias toward polar residues. Positions 123–172 (EPKEPKEPRKAKEPKKAKEHKEPKQKDGAKKARKPREASGTKEAKEKRSC) are enriched in basic and acidic residues. Chromo domains follow at residues 292–343 (NIIE…KDPR) and 375–439 (VEVD…KHVE). Residues 473 to 647 (LFNWYNRKNC…FSLLNFLEPS (175 aa)) enclose the Helicase ATP-binding domain. 486 to 493 (DEMGLGKT) contacts ATP. Residues 598 to 601 (DEAH) carry the DEAH box motif. The Helicase C-terminal domain maps to 787–956 (LIDKLLPKLI…LSKMEVEDLL (170 aa)). The disordered stretch occupies residues 1318–1390 (KSLSAEQGVT…SDPDKSPWPV (73 aa)). Positions 1321-1330 (SAEQGVTDGT) are enriched in polar residues. 2 stretches are compositionally biased toward basic and acidic residues: residues 1333-1351 (IPER…KVDG) and 1367-1376 (FSEKKDDSRA). Residues 1449–1503 (RWTRREQADFYRTVSSFGVVYDQEKKTFDWTQFRIISRLDKKSDESLEQYFYSFV) form the Myb-like domain. Residues 2027-2038 (FENKDDYDRDGN) are compositionally biased toward basic and acidic residues. Disordered stretches follow at residues 2027-2063 (FENK…ITGD), 2116-2148 (SQQY…AAEH), 2321-2351 (QATL…QAEK), 2373-2422 (PGFG…FLPE), 2547-2602 (TSTA…PAIT), and 2648-2715 (VGLE…NDTN). The segment covering 2116–2141 (SQQYEPSGTLPTPVLTSSAGSRTSLS) has biased composition (polar residues). Over residues 2329-2346 (PEGPGPATSAPEPATAAS) the composition is skewed to low complexity. A compositionally biased stretch (low complexity) spans 2547 to 2560 (TSTAPASLSSTTKS). 2 stretches are compositionally biased toward basic and acidic residues: residues 2567–2588 (KTAE…EDKP) and 2706–2715 (ALKDSNNDTN).

Belongs to the SNF2/RAD54 helicase family. As to quaternary structure, interacts with NFE2L2; involved in activation of the transcription. In terms of assembly, (Microbial infection) Interacts with the influenza A polymerase complex composed fo PB1, PB2 and PA. (Microbial infection) Interacts (via N-terminus) with human papillomavirus protein E8^E2C (via C-terminus); this interaction induces transcriptional repression of the viral genome. As to expression, widely expressed.

Its subcellular location is the nucleus. It localises to the nucleoplasm. It carries out the reaction ATP + H2O = ADP + phosphate + H(+). ATP-dependent chromatin-remodeling factor. Regulates transcription by disrupting nucleosomes in a largely non-sliding manner which strongly increases the accessibility of chromatin; nucleosome disruption requires ATP. Activates transcription of specific genes in response to oxidative stress through interaction with NFE2L2. Its function is as follows. (Microbial infection) Acts as a transcriptional repressor of different viruses including influenza virus or papillomavirus. During influenza virus infection, the viral polymerase complex localizes CHD6 to inactive chromatin where it gets degraded in a proteasome independent-manner. The chain is Chromodomain-helicase-DNA-binding protein 6 (CHD6) from Homo sapiens (Human).